The following is a 311-amino-acid chain: Putative RNA-binding protein R05D3.8 (311 aa).

Positions 155-235 (KRLFVSYFPL…RRAVLKESVK (81 aa)) constitute an RRM domain. Over residues 261–270 (TPSRPVTSVH) the composition is skewed to polar residues. The interval 261-311 (TPSRPVTSVHASSSASSNHYDPSAAAGYAPLYHQPPESDPLSQCGYGPRKW) is disordered.

In Caenorhabditis elegans, this protein is Putative RNA-binding protein R05D3.8.